The primary structure comprises 377 residues: Nitric oxide reductase FlRd-NAD(+) reductase (377 aa).

The protein belongs to the FAD-dependent oxidoreductase family. FAD is required as a cofactor.

The protein localises to the cytoplasm. The catalysed reaction is 2 reduced [nitric oxide reductase rubredoxin domain] + NAD(+) + H(+) = 2 oxidized [nitric oxide reductase rubredoxin domain] + NADH. It functions in the pathway nitrogen metabolism; nitric oxide reduction. Its function is as follows. One of at least two accessory proteins for anaerobic nitric oxide (NO) reductase. Reduces the rubredoxin moiety of NO reductase. The chain is Nitric oxide reductase FlRd-NAD(+) reductase from Salmonella typhi.